Reading from the N-terminus, the 137-residue chain is MAGSQDIFDAIVMADERFHGEGYREGYEEGSSLGVMEGRQHGTLHGAKIGSEIGCYQGFAFAWKCLLHSCTTEKDSRKMKVLESLIGMIQKFPYDDPTYDKLHEDLDKIRGKFKQFCSLLNVQPDFKISAEGSGLSF.

At Ala-2 the chain carries N-acetylalanine. Ser-4 carries the phosphoserine modification. The tract at residues 22-58 (GYREGYEEGSSLGVMEGRQHGTLHGAKIGSEIGCYQG) is deca-GX3 motif; required for interaction with YAE1 and the CIA complex.

The protein belongs to the LTO1 family. As to quaternary structure, forms a complex with YAE1. Interacts with PYCR1 and PYCR2. Widely expressed. Highly expressed in placenta, kidney and skeletal muscle.

The protein localises to the nucleus. The complex LTO1:YAE1 functions as a target specific adapter that probably recruits apo-ABCE1 to the cytosolic iron-sulfur protein assembly (CIA) complex machinery. May be required for biogenesis of the large ribosomal subunit and initiation of translation. May play a role in the regulation of proline metabolism and ROS production. This chain is Protein LTO1 homolog, found in Homo sapiens (Human).